The following is an 833-amino-acid chain: Multiphosphoryl transfer protein 2 (833 aa).

In terms of domain architecture, HPr spans 2 to 91 (ALIVEFICEL…QWLRDEFPHC (90 aa)). His16 (tele-phosphohistidine intermediate; for HPr activity) is an active-site residue. Position 16 is a phosphohistidine; by EI (His16). A PTS EI region spans residues 143-653 (LGNLPAAKGV…AAKARMAQLD (511 aa)). His301 acts as the Tele-phosphohistidine intermediate; for PTS EI activity in catalysis. The residue at position 301 (His301) is a Phosphohistidine; by autocatalysis. 2 residues coordinate phosphoenolpyruvate: Arg408 and Arg444. Glu543 and Asp567 together coordinate Mg(2+). Phosphoenolpyruvate contacts are provided by residues 566 to 567 (ND) and Arg577. The Proton donor; for EI activity role is filled by Cys614. Residues 688 to 830 (PLVTAECITL…DAIASLLQHE (143 aa)) form the PTS EIIA type-2 domain. The Tele-phosphohistidine intermediate; for PTS EIIA activity role is filled by His750. Phosphohistidine; by HPr is present on His750.

Belongs to the PEP-utilizing enzyme family. Mg(2+) is required as a cofactor.

Its subcellular location is the cytoplasm. It catalyses the reaction L-histidyl-[protein] + phosphoenolpyruvate = N(pros)-phospho-L-histidyl-[protein] + pyruvate. It carries out the reaction D-fructose(out) + N(pros)-phospho-L-histidyl-[protein] = D-fructose 1-phosphate(in) + L-histidyl-[protein]. Its function is as follows. Multifunctional protein that includes general (non sugar-specific) and sugar-specific components of the phosphoenolpyruvate-dependent sugar phosphotransferase system (sugar PTS). This major carbohydrate active transport system catalyzes the phosphorylation of incoming sugar substrates concomitantly with their translocation across the cell membrane. The enzyme II FrwABC PTS system is involved in fructose transport. The sequence is that of Multiphosphoryl transfer protein 2 from Escherichia coli (strain K12).